The following is a 252-amino-acid chain: Imidazole glycerol phosphate synthase subunit HisF (252 aa).

Active-site residues include aspartate 11 and aspartate 130.

Belongs to the HisA/HisF family. Heterodimer of HisH and HisF.

It is found in the cytoplasm. The enzyme catalyses 5-[(5-phospho-1-deoxy-D-ribulos-1-ylimino)methylamino]-1-(5-phospho-beta-D-ribosyl)imidazole-4-carboxamide + L-glutamine = D-erythro-1-(imidazol-4-yl)glycerol 3-phosphate + 5-amino-1-(5-phospho-beta-D-ribosyl)imidazole-4-carboxamide + L-glutamate + H(+). It participates in amino-acid biosynthesis; L-histidine biosynthesis; L-histidine from 5-phospho-alpha-D-ribose 1-diphosphate: step 5/9. IGPS catalyzes the conversion of PRFAR and glutamine to IGP, AICAR and glutamate. The HisF subunit catalyzes the cyclization activity that produces IGP and AICAR from PRFAR using the ammonia provided by the HisH subunit. The polypeptide is Imidazole glycerol phosphate synthase subunit HisF (Halothermothrix orenii (strain H 168 / OCM 544 / DSM 9562)).